The primary structure comprises 418 residues: Tyrosine--tRNA ligase (418 aa).

Residue Tyr-34 coordinates L-tyrosine. A 'HIGH' region motif is present at residues 39-48 (PTADSLHLGH). Positions 169 and 173 each coordinate L-tyrosine. A 'KMSKS' region motif is present at residues 229-233 (KFGKS). Residue Lys-232 participates in ATP binding. Residues 352-410 (LNIVELLVTSGIVNSKRQAREDVQNGAIYVNGERVQDLDYTLSDSDKIDGELTVIRRGK) form the S4 RNA-binding domain.

It belongs to the class-I aminoacyl-tRNA synthetase family. TyrS type 1 subfamily. In terms of assembly, homodimer.

The protein localises to the cytoplasm. It carries out the reaction tRNA(Tyr) + L-tyrosine + ATP = L-tyrosyl-tRNA(Tyr) + AMP + diphosphate + H(+). Catalyzes the attachment of tyrosine to tRNA(Tyr) in a two-step reaction: tyrosine is first activated by ATP to form Tyr-AMP and then transferred to the acceptor end of tRNA(Tyr). The chain is Tyrosine--tRNA ligase from Streptococcus suis (strain 98HAH33).